The chain runs to 275 residues: 2-dehydro-3-deoxyphosphooctonate aldolase (275 aa).

This sequence belongs to the KdsA family.

The protein resides in the cytoplasm. The enzyme catalyses D-arabinose 5-phosphate + phosphoenolpyruvate + H2O = 3-deoxy-alpha-D-manno-2-octulosonate-8-phosphate + phosphate. The protein operates within carbohydrate biosynthesis; 3-deoxy-D-manno-octulosonate biosynthesis; 3-deoxy-D-manno-octulosonate from D-ribulose 5-phosphate: step 2/3. Its pathway is bacterial outer membrane biogenesis; lipopolysaccharide biosynthesis. The polypeptide is 2-dehydro-3-deoxyphosphooctonate aldolase (Francisella philomiragia subsp. philomiragia (strain ATCC 25017 / CCUG 19701 / FSC 153 / O#319-036)).